The sequence spans 170 residues: RNA pyrophosphohydrolase (170 aa).

Residues 6–150 (GFRPNVGIIL…KRDVYRRALR (145 aa)) form the Nudix hydrolase domain. The Nudix box motif lies at 39-60 (GGINAHESPEQALYRELHEEVG).

This sequence belongs to the Nudix hydrolase family. RppH subfamily. Requires a divalent metal cation as cofactor.

Accelerates the degradation of transcripts by removing pyrophosphate from the 5'-end of triphosphorylated RNA, leading to a more labile monophosphorylated state that can stimulate subsequent ribonuclease cleavage. The chain is RNA pyrophosphohydrolase from Cellvibrio japonicus (strain Ueda107) (Pseudomonas fluorescens subsp. cellulosa).